The primary structure comprises 504 residues: O-fucosyltransferase 39 (504 aa).

Residues 11–27 (WILSMFFFVVLFCNNVS) traverse the membrane as a helical; Signal-anchor for type II membrane protein segment. Asn-115 is a glycosylation site (N-linked (GlcNAc...) asparagine). 288 to 290 (HLR) is a binding site for substrate. Asn-359 and Asn-460 each carry an N-linked (GlcNAc...) asparagine glycan.

Belongs to the glycosyltransferase GT106 family.

The protein localises to the membrane. Its pathway is glycan metabolism. In Arabidopsis thaliana (Mouse-ear cress), this protein is O-fucosyltransferase 39.